The primary structure comprises 384 residues: Cell adhesion molecule CEACAM18 (384 aa).

Positions 1 to 30 (MDLSRPRWSLWRRVFLMASLLACGICQASG) are cleaved as a signal peptide. 5 N-linked (GlcNAc...) asparagine glycosylation sites follow: asparagine 108, asparagine 112, asparagine 121, asparagine 162, and asparagine 270. Residues 227–314 (PDYVLLRSNP…LIMYMDVRIQ (88 aa)) enclose the Ig-like C2-type domain. Residues cysteine 255 and cysteine 296 are joined by a disulfide bond. The tract at residues 358 to 384 (QPLLNQDKSGSMSVHPRPEDKTRRASR) is disordered. Positions 359-369 (PLLNQDKSGSM) are enriched in polar residues. The span at 373–384 (PRPEDKTRRASR) shows a compositional bias: basic and acidic residues.

This sequence belongs to the immunoglobulin superfamily. CEA family.

In Homo sapiens (Human), this protein is Cell adhesion molecule CEACAM18.